The primary structure comprises 289 residues: Probable porphobilinogen deaminase (289 aa).

Cysteine 234 is modified (S-(dipyrrolylmethanemethyl)cysteine).

The protein belongs to the HMBS family. Dipyrromethane is required as a cofactor.

The enzyme catalyses 4 porphobilinogen + H2O = hydroxymethylbilane + 4 NH4(+). It participates in porphyrin-containing compound metabolism; protoporphyrin-IX biosynthesis; coproporphyrinogen-III from 5-aminolevulinate: step 2/4. Its function is as follows. Tetrapolymerization of the monopyrrole PBG into the hydroxymethylbilane pre-uroporphyrinogen in several discrete steps. The sequence is that of Probable porphobilinogen deaminase (hemC) from Archaeoglobus fulgidus (strain ATCC 49558 / DSM 4304 / JCM 9628 / NBRC 100126 / VC-16).